We begin with the raw amino-acid sequence, 255 residues long: tRNA (guanine-N(1)-)-methyltransferase (255 aa).

S-adenosyl-L-methionine is bound by residues Gly-117 and 137-142 (LGDFVL).

Belongs to the RNA methyltransferase TrmD family. Homodimer.

The protein resides in the cytoplasm. The enzyme catalyses guanosine(37) in tRNA + S-adenosyl-L-methionine = N(1)-methylguanosine(37) in tRNA + S-adenosyl-L-homocysteine + H(+). Functionally, specifically methylates guanosine-37 in various tRNAs. In Paracidovorax citrulli (strain AAC00-1) (Acidovorax citrulli), this protein is tRNA (guanine-N(1)-)-methyltransferase.